A 295-amino-acid polypeptide reads, in one-letter code: Trimeric intracellular cation channel type A (295 aa).

At 1-18 (MELLSALSLGELALSFSR) the chain is on the lumenal side. Residues 19–39 (VPLFPVFDLSYFIVSILYLKY) traverse the membrane as a helical segment. Residues 40–51 (EPGAVELSRRHP) are Cytoplasmic-facing. A helical transmembrane segment spans residues 52 to 72 (VASWLCAMLHCFGSYILADLL). Residues 73–85 (LGEPLIDYFSNNS) lie on the Lumenal side of the membrane. Gly-74 contributes to the Ca(2+) binding site. A helical transmembrane segment spans residues 86–106 (SILLASAVWYLIFFCPLDLFY). The Cytoplasmic segment spans residues 107-144 (KCVCFLPVKLIFVAMKEVVRVRKIAVGIHHAHHHYHHG). Residues Lys-122 and Arg-126 each contribute to the a 1,2-diacyl-sn-glycero-3-phospho-(1D-myo-inositol-4,5-bisphosphate) site. A helical transmembrane segment spans residues 145-165 (WFIMIATGWVKGSGVALLSNV). At 166–178 (EQLLRGVWKPETN) the chain is on the lumenal side. Residues 179–199 (EILHMSFPTKASLYGAILFTL) form a helical membrane-spanning segment. The Cytoplasmic portion of the chain corresponds to 200–209 (QQTRWLPVSK). The chain crosses the membrane as a helical span at residues 210 to 230 (ASLIFIFTMFMVSCKVFLTAT). The Lumenal portion of the chain corresponds to 231 to 234 (HSHS). The chain crosses the membrane as a helical span at residues 235–255 (SPFDVLEAYVCPVLFGTGSGG). Residues 256 to 295 (DHPQDNHGAWPGGPPSGALATKSKEELSEGSRKKKTKKAD) are Cytoplasmic-facing. The disordered stretch occupies residues 256-295 (DHPQDNHGAWPGGPPSGALATKSKEELSEGSRKKKTKKAD). The span at 277 to 286 (KSKEELSEGS) shows a compositional bias: basic and acidic residues.

This sequence belongs to the TMEM38 family. As to quaternary structure, homotrimer; conformation seems to be controled by binding to diacylglycerol (DAG).

Its subcellular location is the sarcoplasmic reticulum membrane. The protein resides in the nucleus membrane. It catalyses the reaction K(+)(in) = K(+)(out). With respect to regulation, channel activity is activated by a change of voltage within the sarcoplasmic reticulum lumen and blocked by luminal high Ca(2+) levels. Functionally, intracellular monovalent cation channel required for maintenance of rapid intracellular calcium release. Acts as a potassium counter-ion channel that functions in synchronization with calcium release from intracellular stores. Opened by a change of voltage within the sarcoplasmic reticulum lumen. The protein is Trimeric intracellular cation channel type A of Oryctolagus cuniculus (Rabbit).